The following is a 647-amino-acid chain: Bifunctional enzyme CysN/CysC (647 aa).

Residues 1–472 are sulfate adenylyltransferase; sequence MSHQSDLIAT…TEERAARFGQ (472 aa). One can recognise a tr-type G domain in the interval 22 to 239; sequence KQLLRFITCG…LETVYIGSDR (218 aa). A G1 region spans residues 31–38; sequence GSVDDGKS. 31 to 38 provides a ligand contact to GTP; the sequence is GSVDDGKS. The segment at 89–93 is G2; the sequence is GITID. Residues 110 to 113 are G3; that stretch reads DTPG. GTP is bound by residues 110 to 114 and 165 to 168; these read DTPGH and NKMD. The tract at residues 165–168 is G4; sequence NKMD. Residues 204–206 form a G5 region; it reads SAL. The adenylyl-sulfate kinase stretch occupies residues 473–614; it reads KPATVLLTGL…FPGVTAKYDV (142 aa). 481 to 488 is a binding site for ATP; the sequence is GLTGSGKT.

The protein in the C-terminal section; belongs to the APS kinase family. This sequence in the N-terminal section; belongs to the TRAFAC class translation factor GTPase superfamily. Classic translation factor GTPase family. CysN/NodQ subfamily. As to quaternary structure, heterodimer composed of CysD, the smaller subunit, and CysNC.

The catalysed reaction is sulfate + ATP + H(+) = adenosine 5'-phosphosulfate + diphosphate. It catalyses the reaction adenosine 5'-phosphosulfate + ATP = 3'-phosphoadenylyl sulfate + ADP + H(+). The protein operates within sulfur metabolism; hydrogen sulfide biosynthesis; sulfite from sulfate: step 1/3. It functions in the pathway sulfur metabolism; hydrogen sulfide biosynthesis; sulfite from sulfate: step 2/3. With CysD forms the ATP sulfurylase (ATPS) that catalyzes the adenylation of sulfate producing adenosine 5'-phosphosulfate (APS) and diphosphate, the first enzymatic step in sulfur assimilation pathway. APS synthesis involves the formation of a high-energy phosphoric-sulfuric acid anhydride bond driven by GTP hydrolysis by CysN coupled to ATP hydrolysis by CysD. Functionally, APS kinase catalyzes the synthesis of activated sulfate. This Rhodopirellula baltica (strain DSM 10527 / NCIMB 13988 / SH1) protein is Bifunctional enzyme CysN/CysC (cysNC).